A 351-amino-acid chain; its full sequence is Foldase protein PrsA 1 (351 aa).

A signal peptide spans 1–22; the sequence is MKNSNKLIASVVTLASVMALAA. The N-palmitoyl cysteine moiety is linked to residue Cys23. A lipid anchor (S-diacylglycerol cysteine) is attached at Cys23. In terms of domain architecture, PpiC spans 145–240; that stretch reads TPTMAVEMIT…KKFYIVKVTK (96 aa). Low complexity-rich tracts occupy residues 303 to 317 and 326 to 351; these read KTKA…SESS and ESEQ…PAAQ. The disordered stretch occupies residues 303-351; the sequence is KTKAASESSTTSESSKAAEENPSESEQTQTSSAEEPTETEAQTQEPAAQ.

Belongs to the PrsA family.

Its subcellular location is the cell membrane. The catalysed reaction is [protein]-peptidylproline (omega=180) = [protein]-peptidylproline (omega=0). Its function is as follows. Plays a major role in protein secretion by helping the post-translocational extracellular folding of several secreted proteins. This Streptococcus pyogenes serotype M1 protein is Foldase protein PrsA 1 (prsA1).